We begin with the raw amino-acid sequence, 810 residues long: Capsid protein VP1 (810 aa).

Disordered regions lie at residues 316–366 (QTLS…GATT) and 373–392 (AMSL…NTSG). Polar residues predominate over residues 348-366 (PHNSQGTDPQNPSSSGATT). The span at 379–390 (TGSGTSSGGGNT) shows a compositional bias: gly residues.

It is found in the virion. In terms of biological role, capsid protein self-assembles to form an icosahedral capsid with a T=1 symmetry, about 22 nm in diameter, and consisting of 60 copies of size variants of the capsid protein which differ in the N-terminus. The capsid encapsulates the genomic ssDNA. Capsid proteins are responsible for the attachment to host cell receptors. This attachment induces virion internalization predominantly through clathrin-dependent endocytosis. The sequence is that of Capsid protein VP1 (VP) from Junonia coenia densovirus (isolate pBRJ/1990) (JcDNV).